Reading from the N-terminus, the 193-residue chain is MFKNTFQSGFLSVLYSIGSKPLQIWDKKVRNGHIKRITDNDIQSLVLEIEGTNVSTTYITCPADPKKTLGIKLPFLVMIIKNLKKYFTFEVQVLDDKNVRRRFRASNYQSTTRVKPFICTMPMRLDDGWNQIQFNLSDFTRRAYGTNYIETLRVQIHANCRIRRVYFSDRLYSEDELPAEFKLYLPVQNKAKQ.

Belongs to the CFAP20 family.

It localises to the nucleus. The protein resides in the cytoplasm. Its subcellular location is the cytoskeleton. It is found in the microtubule organizing center. The protein localises to the centrosome. It localises to the centriole. The protein resides in the cilium basal body. Its subcellular location is the cilium axoneme. Its function is as follows. Cilium- and flagellum-specific protein that plays a role in axonemal structure organization and motility. Microtubule inner protein (MIP) part of the dynein-decorated doublet microtubules (DMTs) in cilia axoneme, which is required for motile cilia beating. Involved in the regulation of the size and morphology of cilia. Required for axonemal microtubules polyglutamylation. The polypeptide is Cilia- and flagella-associated protein 20 (CFAP20) (Gallus gallus (Chicken)).